Reading from the N-terminus, the 482-residue chain is Probable 2-carboxy-D-arabinitol-1-phosphatase (482 aa).

A chloroplast-targeting transit peptide spans 1-34 (MISLPLTTPILPSRCLLHKTRRQNSTRRRLLIRS). His55 acts as the Tele-phosphohistidine intermediate in catalysis. The active-site Proton donor/acceptor is Glu129.

This sequence belongs to the phosphoglycerate mutase family.

It is found in the plastid. The protein localises to the chloroplast stroma. The enzyme catalyses 2-carboxy-D-arabinitol 1-phosphate + H2O = 2-carboxy-D-arabinitol + phosphate. Functionally, phosphoglycerate mutase-like protein lacking PGM activity, but having 2-carboxy-D-arabinitol 1-phosphate (CA1P) phosphatase activity. Prevents the accumulation of D-glycero-2,3-pentodiulose-1,5-bisphosphate (PDBP) a potent inhibitor of ribulose-1,5-bisphosphate carboxylase (RuBisCO). PDBP is produced during the oxidation of ribulose-1,5-bisphosphate, the substrate of RuBisCO. The sequence is that of Probable 2-carboxy-D-arabinitol-1-phosphatase from Arabidopsis thaliana (Mouse-ear cress).